A 113-amino-acid chain; its full sequence is Large ribosomal subunit protein uL22 (113 aa).

It belongs to the universal ribosomal protein uL22 family. In terms of assembly, part of the 50S ribosomal subunit.

This protein binds specifically to 23S rRNA; its binding is stimulated by other ribosomal proteins, e.g. L4, L17, and L20. It is important during the early stages of 50S assembly. It makes multiple contacts with different domains of the 23S rRNA in the assembled 50S subunit and ribosome. In terms of biological role, the globular domain of the protein is located near the polypeptide exit tunnel on the outside of the subunit, while an extended beta-hairpin is found that lines the wall of the exit tunnel in the center of the 70S ribosome. The polypeptide is Large ribosomal subunit protein uL22 (Stenotrophomonas maltophilia (strain K279a)).